A 424-amino-acid chain; its full sequence is L-glutamine:2-deoxy-scyllo-inosose aminotransferase (424 aa).

Lysine 202 carries the post-translational modification N6-(pyridoxal phosphate)lysine.

Belongs to the DegT/DnrJ/EryC1 family. L-glutamine:2-deoxy-scyllo-inosose/scyllo-inosose aminotransferase subfamily. Pyridoxal 5'-phosphate is required as a cofactor.

It carries out the reaction 2-deoxy-L-scyllo-inosose + L-glutamine = 2-deoxy-scyllo-inosamine + 2-oxoglutaramate. It catalyses the reaction 3-amino-2,3-dideoxy-scyllo-inosose + L-glutamine = 2-deoxystreptamine + 2-oxoglutaramate. The protein operates within metabolic intermediate biosynthesis; 2-deoxystreptamine biosynthesis; 2-deoxystreptamine from D-glucose 6-phosphate: step 2/4. Its pathway is metabolic intermediate biosynthesis; 2-deoxystreptamine biosynthesis; 2-deoxystreptamine from D-glucose 6-phosphate: step 4/4. It functions in the pathway antibiotic biosynthesis; paromomycin biosynthesis. Functionally, catalyzes the PLP-dependent transamination of 2-deoxy-scyllo-inosose (2-DOI) to form 2-deoxy-scyllo-inosamine (2-DOIA) using L-glutamine as the amino donor. Also catalyzes the transamination of 3-amino-2,3-dideoxy-scyllo-inosose (keto-2-DOIA) into 2-deoxystreptamine (2-DOS). The protein is L-glutamine:2-deoxy-scyllo-inosose aminotransferase (parS) of Streptomyces paromomycinus (Streptomyces rimosus subsp. paromomycinus).